The chain runs to 226 residues: MLLHIPAIFTAEEVSRIRAALEQAEWADGKATAGYQSAKAKHNLQLPQDHPLAREIGEAMLQRLWNHPLFMSAALPLKVFPPLFNCYTGGGSFDFHIDNAVRDVHGGRERVRTDLSSTLFFSDPEDYDGGELVIQDTYGLQQVKLPAGDLVLYPGTSLHKVNPVTRGARYASFFWTQSLVREDSQRTLLFEMDQSIQRLTRDVPDHPSLIRLTGTYHNLLRRWSEL.

The Fe2OG dioxygenase domain maps to 78–178 (KVFPPLFNCY…RYASFFWTQS (101 aa)). 3 residues coordinate Fe cation: His-96, Asp-98, and His-159. 2-oxoglutarate is bound at residue Arg-169.

Fe(2+) is required as a cofactor. The cofactor is L-ascorbate.

This is PKHD-type hydroxylase PiuC (piuC) from Pseudomonas aeruginosa (strain ATCC 15692 / DSM 22644 / CIP 104116 / JCM 14847 / LMG 12228 / 1C / PRS 101 / PAO1).